Reading from the N-terminus, the 317-residue chain is D-alanine--D-alanine ligase (317 aa).

Positions 104 to 303 (KRVWLQHGLP…YAELCVAILA (200 aa)) constitute an ATP-grasp domain. Residue 130-185 (PDRLGLPLILKPPHEGSTVGITKVAACADMEQAYAAASHFDEVVLAEQFVRGRELT) coordinates ATP. Mg(2+)-binding residues include Asp-257, Glu-270, and Asn-272.

It belongs to the D-alanine--D-alanine ligase family. It depends on Mg(2+) as a cofactor. Mn(2+) serves as cofactor.

The protein resides in the cytoplasm. The catalysed reaction is 2 D-alanine + ATP = D-alanyl-D-alanine + ADP + phosphate + H(+). The protein operates within cell wall biogenesis; peptidoglycan biosynthesis. Cell wall formation. This chain is D-alanine--D-alanine ligase, found in Bordetella avium (strain 197N).